The sequence spans 271 residues: Ribonuclease HII (271 aa).

One can recognise an RNase H type-2 domain in the interval 84–271 (VLIAGVDEVG…HRMSFLSNYI (188 aa)). Asp-90, Glu-91, and Asp-187 together coordinate a divalent metal cation.

Belongs to the RNase HII family. It depends on Mn(2+) as a cofactor. Requires Mg(2+) as cofactor.

Its subcellular location is the cytoplasm. The catalysed reaction is Endonucleolytic cleavage to 5'-phosphomonoester.. Endonuclease that specifically degrades the RNA of RNA-DNA hybrids. The polypeptide is Ribonuclease HII (Clostridium tetani (strain Massachusetts / E88)).